Consider the following 438-residue polypeptide: Coiled-coil domain-containing protein 78 (438 aa).

Coiled-coil stretches lie at residues 74 to 105 (HLHE…LRGD) and 217 to 246 (SCQG…YVLR). Positions 345–381 (FSHREDQHGGPGALLSSPKKRPGGASQGGTSEPQGLD) are disordered.

The protein belongs to the CCDC78 family. As to expression, expressed primarily in skeletal muscle.

Its subcellular location is the cytoplasm. The protein resides in the cytoskeleton. It is found in the microtubule organizing center. It localises to the centrosome. The protein localises to the centriole. Its subcellular location is the perinuclear region. The protein resides in the cell membrane. It is found in the sarcolemma. It localises to the sarcoplasmic reticulum. Component of the deuterosome, a structure that promotes de novo centriole amplification in multiciliated cells that can generate more than 100 centrioles. Deuterosome-mediated centriole amplification occurs in terminally differentiated multiciliated cells (G1/0) and not in S phase. Essential for centriole amplification and is required for CEP152 localization to the deuterosome. This is Coiled-coil domain-containing protein 78 (CCDC78) from Homo sapiens (Human).